The primary structure comprises 401 residues: Bifunctional enzyme IspD/IspF (401 aa).

A 2-C-methyl-D-erythritol 4-phosphate cytidylyltransferase region spans residues 1 to 234 (MQKPPRTAAI…SRLTAALGDI (234 aa)). A 2-C-methyl-D-erythritol 2,4-cyclodiphosphate synthase region spans residues 235–401 (RTGTGYDVHA…SPWGAEGQAS (167 aa)). Residues Asp241 and His243 each contribute to the a divalent metal cation site. 4-CDP-2-C-methyl-D-erythritol 2-phosphate is bound by residues 241-243 (DVH) and 267-268 (HS). Residue His275 coordinates a divalent metal cation. 4-CDP-2-C-methyl-D-erythritol 2-phosphate-binding positions include 289-291 (DIG), 365-368 (TTSE), Phe372, and Arg375.

This sequence in the N-terminal section; belongs to the IspD/TarI cytidylyltransferase family. IspD subfamily. The protein in the C-terminal section; belongs to the IspF family. Requires a divalent metal cation as cofactor.

It catalyses the reaction 2-C-methyl-D-erythritol 4-phosphate + CTP + H(+) = 4-CDP-2-C-methyl-D-erythritol + diphosphate. It carries out the reaction 4-CDP-2-C-methyl-D-erythritol 2-phosphate = 2-C-methyl-D-erythritol 2,4-cyclic diphosphate + CMP. The protein operates within isoprenoid biosynthesis; isopentenyl diphosphate biosynthesis via DXP pathway; isopentenyl diphosphate from 1-deoxy-D-xylulose 5-phosphate: step 2/6. It functions in the pathway isoprenoid biosynthesis; isopentenyl diphosphate biosynthesis via DXP pathway; isopentenyl diphosphate from 1-deoxy-D-xylulose 5-phosphate: step 4/6. Bifunctional enzyme that catalyzes the formation of 4-diphosphocytidyl-2-C-methyl-D-erythritol from CTP and 2-C-methyl-D-erythritol 4-phosphate (MEP) (IspD), and catalyzes the conversion of 4-diphosphocytidyl-2-C-methyl-D-erythritol 2-phosphate (CDP-ME2P) to 2-C-methyl-D-erythritol 2,4-cyclodiphosphate (ME-CPP) with a corresponding release of cytidine 5-monophosphate (CMP) (IspF). This chain is Bifunctional enzyme IspD/IspF, found in Rhodopseudomonas palustris (strain HaA2).